A 370-amino-acid polypeptide reads, in one-letter code: Queuine tRNA-ribosyltransferase (370 aa).

The active-site Proton acceptor is the D92. Residues 92–96, D146, Q190, and G217 each bind substrate; that span reads DSGGF. The tract at residues 248 to 254 is RNA binding; it reads GVGTPEN. The active-site Nucleophile is the D267. C305, C307, C310, and H336 together coordinate Zn(2+).

It belongs to the queuine tRNA-ribosyltransferase family. In terms of assembly, homodimer. Within each dimer, one monomer is responsible for RNA recognition and catalysis, while the other monomer binds to the replacement base PreQ1. The cofactor is Zn(2+).

It catalyses the reaction 7-aminomethyl-7-carbaguanine + guanosine(34) in tRNA = 7-aminomethyl-7-carbaguanosine(34) in tRNA + guanine. The protein operates within tRNA modification; tRNA-queuosine biosynthesis. Catalyzes the base-exchange of a guanine (G) residue with the queuine precursor 7-aminomethyl-7-deazaguanine (PreQ1) at position 34 (anticodon wobble position) in tRNAs with GU(N) anticodons (tRNA-Asp, -Asn, -His and -Tyr). Catalysis occurs through a double-displacement mechanism. The nucleophile active site attacks the C1' of nucleotide 34 to detach the guanine base from the RNA, forming a covalent enzyme-RNA intermediate. The proton acceptor active site deprotonates the incoming PreQ1, allowing a nucleophilic attack on the C1' of the ribose to form the product. After dissociation, two additional enzymatic reactions on the tRNA convert PreQ1 to queuine (Q), resulting in the hypermodified nucleoside queuosine (7-(((4,5-cis-dihydroxy-2-cyclopenten-1-yl)amino)methyl)-7-deazaguanosine). The protein is Queuine tRNA-ribosyltransferase of Desulforapulum autotrophicum (strain ATCC 43914 / DSM 3382 / VKM B-1955 / HRM2) (Desulfobacterium autotrophicum).